Reading from the N-terminus, the 321-residue chain is Anthranilate phosphoribosyltransferase (321 aa).

5-phospho-alpha-D-ribose 1-diphosphate contacts are provided by residues Gly-72, 75–76 (GD), Thr-80, 82–85 (NVST), 99–107 (KHGNVSITS), and Ser-111. Gly-72 serves as a coordination point for anthranilate. Mg(2+) is bound at residue Ser-84. Residue Asn-102 participates in anthranilate binding. Arg-157 is a binding site for anthranilate. Residues Asp-216 and Glu-217 each contribute to the Mg(2+) site.

It belongs to the anthranilate phosphoribosyltransferase family. As to quaternary structure, homodimer. Mg(2+) is required as a cofactor.

It carries out the reaction N-(5-phospho-beta-D-ribosyl)anthranilate + diphosphate = 5-phospho-alpha-D-ribose 1-diphosphate + anthranilate. It functions in the pathway amino-acid biosynthesis; L-tryptophan biosynthesis; L-tryptophan from chorismate: step 2/5. In terms of biological role, catalyzes the transfer of the phosphoribosyl group of 5-phosphorylribose-1-pyrophosphate (PRPP) to anthranilate to yield N-(5'-phosphoribosyl)-anthranilate (PRA). The chain is Anthranilate phosphoribosyltransferase from Methanococcus maripaludis (strain DSM 14266 / JCM 13030 / NBRC 101832 / S2 / LL).